Reading from the N-terminus, the 220-residue chain is Adapter protein MecA (220 aa).

Belongs to the MecA family. Homodimer.

Functionally, enables the recognition and targeting of unfolded and aggregated proteins to the ClpC protease or to other proteins involved in proteolysis. The sequence is that of Adapter protein MecA from Enterococcus faecalis (strain ATCC 700802 / V583).